A 101-amino-acid polypeptide reads, in one-letter code: Fructose-bisphosphate aldolase (101 aa).

Lys-11 serves as the catalytic Schiff-base intermediate with dihydroxyacetone-P.

The protein belongs to the class I fructose-bisphosphate aldolase family.

The enzyme catalyses beta-D-fructose 1,6-bisphosphate = D-glyceraldehyde 3-phosphate + dihydroxyacetone phosphate. It participates in carbohydrate degradation; glycolysis; D-glyceraldehyde 3-phosphate and glycerone phosphate from D-glucose: step 4/4. In Lymnaea stagnalis (Great pond snail), this protein is Fructose-bisphosphate aldolase.